A 215-amino-acid chain; its full sequence is MAFLISALLILIGYLLGSIPTGYLTGLHLKGIDVRQHGSGSTGATNILRTIGKRAAIFVLTVDLAKAMLAVILVKLWFFVESPEMIPLEWKSWLVVFAAIAAVLGHSKSIFLNFTGGKSVASSLGVLLVLNPIVALGTLGSFLAMLSLSRIVSLSSITGVVAVNVLMFGLHQPLPYCLFGVIVGLYVTFRHRTNIIRLLQGTEPRLGQKLQQEGS.

Transmembrane regions (helical) follow at residues 1-21 (MAFL…SIPT), 57-77 (IFVL…VKLW), 85-105 (MIPL…AVLG), 126-146 (VLLV…LAML), and 165-185 (VLMF…IVGL).

This sequence belongs to the PlsY family. Probably interacts with PlsX.

The protein resides in the cell inner membrane. The catalysed reaction is an acyl phosphate + sn-glycerol 3-phosphate = a 1-acyl-sn-glycero-3-phosphate + phosphate. It functions in the pathway lipid metabolism; phospholipid metabolism. Catalyzes the transfer of an acyl group from acyl-phosphate (acyl-PO(4)) to glycerol-3-phosphate (G3P) to form lysophosphatidic acid (LPA). This enzyme utilizes acyl-phosphate as fatty acyl donor, but not acyl-CoA or acyl-ACP. In Crocosphaera subtropica (strain ATCC 51142 / BH68) (Cyanothece sp. (strain ATCC 51142)), this protein is Glycerol-3-phosphate acyltransferase.